Reading from the N-terminus, the 671-residue chain is Spartin (671 aa).

M1 carries the post-translational modification N-acetylmethionine. An MIT domain is found at 16 to 94 (IKEAYEKAFM…LQNVRTRLEI (79 aa)). The segment at 110 to 175 (VPKLYPEFPP…CPAEAPPAYS (66 aa)) is disordered. Residues 118 to 128 (PPKDACKKSPE) are compositionally biased toward basic and acidic residues. A Phosphoserine modification is found at S126. The span at 143–158 (GSASAACAGPSGAPSA) shows a compositional bias: low complexity. A compositionally biased stretch (pro residues) spans 159-174 (LPVPSPSCPAEAPPAY). The interval 190–385 (DSGEFSSVGE…SIDQGSKDAR (196 aa)) is ubiquitin-binding region (UBR) domain. Residues 193–200 (EFSSVGED) carry the LC3-interacting region (LIR); mediates interaction with MAP1LC3A AND MAP1LC3C motif. Residues 346 to 421 (FQIPGRSSHP…SSEEKSKELP (76 aa)) are disordered. A Glycyl lysine isopeptide (Lys-Gly) (interchain with G-Cter in ubiquitin) cross-link involves residue K360. Positions 369-379 (QSSSSGSSIDQ) are enriched in low complexity. Residues 384–393 (ARHKGKRGKK) show a composition bias toward basic residues. In terms of domain architecture, Senescence spans 431–615 (ILSGASWVSW…YNIDNIGIKA (185 aa)). The interval 435–507 (ASWVSWGLVK…LVDGVCTVAN (73 aa)) is required for localization to lipid droplets. S474 is subject to Phosphoserine. Residues 635–671 (VERPQRESQGGATSTEGRRDIGKQVEEEKPGAGKKDK) are disordered. Residues 650–671 (EGRRDIGKQVEEEKPGAGKKDK) are compositionally biased toward basic and acidic residues.

Interacts with ITCH and WWP1. Interacts (via MIT domain) with IST1; leading to the recruitment of SPART to midbodies. Interacts with MAP1LC3A and MAP1LC3C. Post-translationally, ubiquitinated; ubiquitination does not require ITCH and WWP1. Brain (at protein level).

It is found in the cytoplasm. The protein localises to the midbody. Its subcellular location is the lipid droplet. Functionally, lipophagy receptor that plays an important role in lipid droplet (LD) turnover in motor neurons. Localizes to LDs and interacts with components of the autophagy machinery, such as MAP1LC3A/C proteins to deliver LDs to autophagosomes for degradation via lipophagy. Lipid transfer protein required for lipid droplet degradation, including by lipophagy. Can bind and transfer all lipid species found in lipid droplets, from phospholipids to triglycerides and sterol esters but the direction of lipid transfer by spartin and its cargos are unknown. May be implicated in endosomal trafficking, or microtubule dynamics, or both. Participates in cytokinesis. The sequence is that of Spartin from Mus musculus (Mouse).